Consider the following 343-residue polypeptide: S-adenosylmethionine:tRNA ribosyltransferase-isomerase (343 aa).

It belongs to the QueA family. Monomer.

The protein resides in the cytoplasm. The enzyme catalyses 7-aminomethyl-7-carbaguanosine(34) in tRNA + S-adenosyl-L-methionine = epoxyqueuosine(34) in tRNA + adenine + L-methionine + 2 H(+). It functions in the pathway tRNA modification; tRNA-queuosine biosynthesis. Its function is as follows. Transfers and isomerizes the ribose moiety from AdoMet to the 7-aminomethyl group of 7-deazaguanine (preQ1-tRNA) to give epoxyqueuosine (oQ-tRNA). The polypeptide is S-adenosylmethionine:tRNA ribosyltransferase-isomerase (Latilactobacillus sakei subsp. sakei (strain 23K) (Lactobacillus sakei subsp. sakei)).